A 133-amino-acid chain; its full sequence is Small ribosomal subunit protein uS8 (133 aa).

Belongs to the universal ribosomal protein uS8 family. Part of the 30S ribosomal subunit. Contacts proteins S5 and S12.

Functionally, one of the primary rRNA binding proteins, it binds directly to 16S rRNA central domain where it helps coordinate assembly of the platform of the 30S subunit. The sequence is that of Small ribosomal subunit protein uS8 from Orientia tsutsugamushi (strain Ikeda) (Rickettsia tsutsugamushi).